A 439-amino-acid chain; its full sequence is Xylose isomerase (439 aa).

Active-site residues include histidine 101 and aspartate 104. Mg(2+) is bound by residues glutamate 232, glutamate 268, histidine 271, aspartate 296, aspartate 307, aspartate 309, and aspartate 339.

The protein belongs to the xylose isomerase family. As to quaternary structure, homotetramer. The cofactor is Mg(2+).

Its subcellular location is the cytoplasm. It carries out the reaction alpha-D-xylose = alpha-D-xylulofuranose. This is Xylose isomerase from Serratia proteamaculans (strain 568).